We begin with the raw amino-acid sequence, 481 residues long: Glutamate--glyoxylate aminotransferase 1 (481 aa).

Position 291 is an N6-(pyridoxal phosphate)lysine (Lys291). A Peroxisomal targeting signal motif is present at residues Ser479–Met481.

Belongs to the class-I pyridoxal-phosphate-dependent aminotransferase family. Alanine aminotransferase subfamily. Homodimer. It depends on pyridoxal 5'-phosphate as a cofactor. Post-translationally, the N-terminus is blocked. As to expression, mostly expressed in leaves, and, to a lower extent, in shoots, stems, flowers, seedlings and green siliques.

The protein localises to the peroxisome. The catalysed reaction is L-alanine + 2-oxoglutarate = pyruvate + L-glutamate. It carries out the reaction glyoxylate + L-alanine = glycine + pyruvate. The enzyme catalyses glycine + 2-oxoglutarate = glyoxylate + L-glutamate. It functions in the pathway amino-acid biosynthesis; glycine biosynthesis; glycine from glyoxylate: step 1/1. Its pathway is photosynthesis; C4 acid pathway. It participates in amino-acid degradation; L-alanine degradation via transaminase pathway; pyruvate from L-alanine: step 1/1. Catalyzes the glutamate:glyoxylate (GGT or GGAT), alanine:glyoxylate (AGT), alanine:2-oxoglutarate (AKT) and glutamate:pyruvate (GPT) aminotransferase reactions in peroxisomes. Required for abscisic acid (ABA)- and stress-mediated responses in an H(2)O(2)-dependent manner. Functions as a photorespiratory aminotransferase that modulates amino acid content during photorespiration (GGAT activity); promotes serine, glycine and citrulline metabolism in response to light. In Arabidopsis thaliana (Mouse-ear cress), this protein is Glutamate--glyoxylate aminotransferase 1 (GGAT1).